The primary structure comprises 214 residues: Guanylate kinase (214 aa).

One can recognise a Guanylate kinase-like domain in the interval 12 to 191 (GLMLVMSSPS…SIAAVQAILA (180 aa)). 19-26 (SPSGAGKT) contributes to the ATP binding site.

It belongs to the guanylate kinase family.

It localises to the cytoplasm. The enzyme catalyses GMP + ATP = GDP + ADP. Functionally, essential for recycling GMP and indirectly, cGMP. The polypeptide is Guanylate kinase (Paramagnetospirillum magneticum (strain ATCC 700264 / AMB-1) (Magnetospirillum magneticum)).